The sequence spans 373 residues: Saccharopine dehydrogenase [NAD(+), L-lysine-forming] (373 aa).

Residue alanine 2 is modified to N-acetylalanine; partial. Arginine 18 and lysine 77 together coordinate L-saccharopine. Lysine 77 serves as the catalytic Proton acceptor. Histidine 96 (proton donor) is an active-site residue. Glutamine 101 lines the L-saccharopine pocket. Arginine 130 lines the NAD(+) pocket. L-saccharopine contacts are provided by arginine 131 and phenylalanine 135. Residues glycine 203–arginine 204, aspartate 227, threonine 231, tyrosine 251, and valine 278 contribute to the NAD(+) site. Cysteines 205 and 249 form a disulfide. Position 279-281 (serine 279–aspartate 281) interacts with L-saccharopine. Residue isoleucine 318–leucine 321 coordinates NAD(+). The short motif at serine 371–leucine 373 is the Microbody targeting signal element.

It belongs to the AlaDH/PNT family. As to quaternary structure, monomer.

Its subcellular location is the peroxisome. It catalyses the reaction L-saccharopine + NAD(+) + H2O = L-lysine + 2-oxoglutarate + NADH + H(+). It participates in amino-acid biosynthesis; L-lysine biosynthesis via AAA pathway; L-lysine from L-alpha-aminoadipate (fungal route): step 3/3. With respect to regulation, inhibited by p-chloromercuribenzoate and iodoacetate by modification of the active site cysteine residue. Inhibited by diethyl pyrocarbonate by modification of histidine residues. Inhibited by pyridoxal 5'-phosphate by modification of an essential lysine residue. Its function is as follows. Catalyzes the NAD(+)-dependent cleavage of saccharopine to L-lysine and 2-oxoglutarate, the final step in the alpha-aminoadipate (AAA) pathway for lysine biosynthesis. The protein is Saccharopine dehydrogenase [NAD(+), L-lysine-forming] of Saccharomyces cerevisiae (strain ATCC 204508 / S288c) (Baker's yeast).